The chain runs to 227 residues: Small ribosomal subunit protein uS3 (227 aa).

Positions 39–107 constitute a KH type-2 domain; that stretch reads VRQLLQKRLK…PVHITIEEVR (69 aa).

It belongs to the universal ribosomal protein uS3 family. Part of the 30S ribosomal subunit. Forms a tight complex with proteins S10 and S14.

Functionally, binds the lower part of the 30S subunit head. Binds mRNA in the 70S ribosome, positioning it for translation. The polypeptide is Small ribosomal subunit protein uS3 (rpsC) (Coxiella burnetii (strain RSA 493 / Nine Mile phase I)).